The chain runs to 109 residues: Nucleoid-associated protein ECA1177 (109 aa).

The protein belongs to the YbaB/EbfC family. In terms of assembly, homodimer.

It is found in the cytoplasm. Its subcellular location is the nucleoid. Its function is as follows. Binds to DNA and alters its conformation. May be involved in regulation of gene expression, nucleoid organization and DNA protection. In Pectobacterium atrosepticum (strain SCRI 1043 / ATCC BAA-672) (Erwinia carotovora subsp. atroseptica), this protein is Nucleoid-associated protein ECA1177.